The chain runs to 87 residues: Small ribosomal subunit protein bS20 (87 aa).

A disordered region spans residues 1–22 (MANSAQARKRARQAVKQRAHNA). Positions 7-19 (ARKRARQAVKQRA) are enriched in basic residues.

Belongs to the bacterial ribosomal protein bS20 family.

Its function is as follows. Binds directly to 16S ribosomal RNA. This chain is Small ribosomal subunit protein bS20, found in Methylobacillus flagellatus (strain ATCC 51484 / DSM 6875 / VKM B-1610 / KT).